A 445-amino-acid chain; its full sequence is Phosphoglucosamine mutase (445 aa).

The active-site Phosphoserine intermediate is the S102. S102, D241, D243, and D245 together coordinate Mg(2+). S102 is modified (phosphoserine).

It belongs to the phosphohexose mutase family. Mg(2+) is required as a cofactor. Activated by phosphorylation.

It catalyses the reaction alpha-D-glucosamine 1-phosphate = D-glucosamine 6-phosphate. Catalyzes the conversion of glucosamine-6-phosphate to glucosamine-1-phosphate. This chain is Phosphoglucosamine mutase, found in Aliivibrio fischeri (strain ATCC 700601 / ES114) (Vibrio fischeri).